A 156-amino-acid polypeptide reads, in one-letter code: Small ribosomal subunit protein uS7 (156 aa).

Belongs to the universal ribosomal protein uS7 family. As to quaternary structure, part of the 30S ribosomal subunit. Contacts proteins S9 and S11.

In terms of biological role, one of the primary rRNA binding proteins, it binds directly to 16S rRNA where it nucleates assembly of the head domain of the 30S subunit. Is located at the subunit interface close to the decoding center, probably blocks exit of the E-site tRNA. The polypeptide is Small ribosomal subunit protein uS7 (Prochlorococcus marinus (strain MIT 9211)).